A 579-amino-acid chain; its full sequence is Folliculin (579 aa).

Residues 31-82 (QGAGSGDSPDQVEQAEEEEGGIQMSSRVRAHSPAEGASSESSSPGPKKSDMC) are disordered. 2 positions are modified to phosphoserine: Ser62 and Ser73. Low complexity predominate over residues 63 to 76 (PAEGASSESSSPGP). Residues 86 to 242 (RSLAVGHPGY…RNGNAARSLT (157 aa)) enclose the uDENN FLCN/SMCR8-type domain. Residues 287 to 310 (EKLADLEEESESWDNSEAEEEEKA) adopt a coiled-coil conformation. Residues 294-308 (EESESWDNSEAEEEE) show a composition bias toward acidic residues. A disordered region spans residues 294 to 323 (EESESWDNSEAEEEEKAPVTPEGAEGRELT). Phosphoserine is present on residues Ser302, Ser406, Ser537, Ser542, and Ser571. The 153-residue stretch at 339 to 491 (QPPKLTGFKS…ILNKIEAALT (153 aa)) folds into the cDENN FLCN/SMCR8-type domain. The region spanning 493–558 (QNLSVDVVDQ…LLKFWMTGLS (66 aa)) is the dDENN FLCN/SMCR8-type domain.

Belongs to the folliculin family. In terms of assembly, interacts (via C-terminus) with FNIP1 or FNIP2 (via C-terminus). Component of the lysosomal folliculin complex (LFC), composed of FLCN, FNIP1 (or FNIP2), RagA/RRAGA or RagB/RRAGB GDP-bound, RagC/RRAGC or RagD/RRAGD GTP-bound, and Ragulator. Interaction with FNIP1 or FNIP2 mediates indirect interaction with the PRKAA1, PRKAB1 and PRKAG1 subunits of 5'-AMP-activated protein kinase (AMPK). Interacts with HSP90AA1 in the presence of FNIP1. Interacts with HSP70, STUB1, CDC37, AHSA1, CCT2, STIP1, PTGES3 and PPP5C. Interacts with GABARAP; interaction takes place in the presence of FNIP1 and/or FNIP2. Interacts with RILP; the interaction is direct and promotes association between RILP and RAB34. Interacts with KIF3A and KIF3B. Interacts with lactate dehydrogenase LDHA, but not LDHB; the interaction is direct, may preferentially bind LDHA dimers rather than tetramers, and regulates LDHA activity, acting as an uncompetitive inhibitor. In terms of processing, phosphorylation by ULK1 modulates the interaction with GABARAP and is required to regulate autophagy. In terms of tissue distribution, highly expressed in adult heart, pancreas, and prostate with moderate expression in adult brain, kidney, liver, adipose tissue and lung.

It is found in the lysosome membrane. It localises to the cytoplasm. Its subcellular location is the cytosol. The protein localises to the cell projection. The protein resides in the cilium. It is found in the cytoskeleton. It localises to the microtubule organizing center. Its subcellular location is the centrosome. The protein localises to the spindle. The protein resides in the nucleus. GTPase-activating activity is inhibited in the folliculin complex (LFC), which stabilizes the GDP-bound state of RagA/RRAGA (or RagB/RRAGB), because Arg-164 is located far from the RagC/RRAGC or RagD/RRAGD nucleotide pocket. Disassembly of the LFC complex upon amino acid restimulation liberates the GTPase-activating activity. Multi-functional protein, involved in both the cellular response to amino acid availability and in the regulation of glycolysis. GTPase-activating protein that plays a key role in the cellular response to amino acid availability through regulation of the non-canonical mTORC1 signaling cascade controlling the MiT/TFE factors TFEB and TFE3. Activates mTORC1 by acting as a GTPase-activating protein: specifically stimulates GTP hydrolysis by RagC/RRAGC or RagD/RRAGD, promoting the conversion to the GDP-bound state of RagC/RRAGC or RagD/RRAGD, and thereby activating the kinase activity of mTORC1. The GTPase-activating activity is inhibited during starvation and activated in presence of nutrients. Acts as a key component for non-canonical mTORC1-dependent control of the MiT/TFE factors TFEB and TFE3, while it is not involved in mTORC1-dependent phosphorylation of canonical RPS6KB1/S6K1 and EIF4EBP1/4E-BP1. In low-amino acid conditions, the lysosomal folliculin complex (LFC) is formed on the membrane of lysosomes, which inhibits the GTPase-activating activity of FLCN, inactivates mTORC1 and maximizes nuclear translocation of TFEB and TFE3. Upon amino acid restimulation, RagA/RRAGA (or RagB/RRAGB) nucleotide exchange promotes disassembly of the LFC complex and liberates the GTPase-activating activity of FLCN, leading to activation of mTORC1 and subsequent cytoplasmic retention of TFEB and TFE3. Indirectly acts as a positive regulator of Wnt signaling by promoting mTOR-dependent cytoplasmic retention of MiT/TFE factor TFE3. Required for the exit of hematopoietic stem cell from pluripotency by promoting mTOR-dependent cytoplasmic retention of TFE3, thereby increasing Wnt signaling. Involved in the control of embryonic stem cells differentiation; together with LAMTOR1 it is necessary to recruit and activate RagC/RRAGC and RagD/RRAGD at the lysosomes, and to induce exit of embryonic stem cells from pluripotency via non-canonical, mTOR-independent TFE3 inactivation. Acts as an inhibitor of browning of adipose tissue by regulating mTOR-dependent cytoplasmic retention of TFE3. In response to flow stress, regulates STK11/LKB1 accumulation and mTORC1 activation through primary cilia: may act by recruiting STK11/LKB1 to primary cilia for activation of AMPK resided at basal bodies, causing mTORC1 down-regulation. Together with FNIP1 and/or FNIP2, regulates autophagy: following phosphorylation by ULK1, interacts with GABARAP and promotes autophagy. Required for starvation-induced perinuclear clustering of lysosomes by promoting association of RILP with its effector RAB34. Regulates glycolysis by binding to lactate dehydrogenase LDHA, acting as an uncompetitive inhibitor. The chain is Folliculin from Mus musculus (Mouse).